The sequence spans 41 residues: Divisome-associated membrane protein Blr (41 aa).

The Cytoplasmic segment spans residues 1 to 3; the sequence is MNR. The chain crosses the membrane as a helical span at residues 4 to 24; that stretch reads LIELTGWIVLVVSVILLGVAS. Over 25–41 the chain is Periplasmic; the sequence is HIDNYQPPEQSASVQHK.

As to quaternary structure, interacts with FtsL and several other divisomal proteins, including FtsI, FtsK, FtsN, FtsQ, FtsW and YmgF. Post-translationally, the N-terminus is blocked.

The protein resides in the cell inner membrane. Component of the cell division machinery, which is probably involved in the stabilization of the divisome under certain stress conditions. In Escherichia coli (strain K12), this protein is Divisome-associated membrane protein Blr (blr).